The following is a 261-amino-acid chain: Small ribosomal subunit protein mS23 (261 aa).

The segment at 234–261 (NPSESWATDEKDPKKNDDIEEDVEEIKL) is disordered. Residues 241-250 (TDEKDPKKND) show a composition bias toward basic and acidic residues. A compositionally biased stretch (acidic residues) spans 251-261 (DIEEDVEEIKL).

The protein belongs to the mitochondrion-specific ribosomal protein mS23 family. In terms of assembly, component of the mitochondrial small ribosomal subunit.

Its subcellular location is the mitochondrion. This chain is Small ribosomal subunit protein mS23 (RSM25), found in Vanderwaltozyma polyspora (strain ATCC 22028 / DSM 70294 / BCRC 21397 / CBS 2163 / NBRC 10782 / NRRL Y-8283 / UCD 57-17) (Kluyveromyces polysporus).